A 634-amino-acid polypeptide reads, in one-letter code: Factor of DNA methylation 1 (634 aa).

Positions 288–469 (LDEKKNLHQA…LESMNSVLMT (182 aa)) form a coiled coil. Residues 349 to 364 (ELDRQKLDEDKRKSDA) show a composition bias toward basic and acidic residues. Positions 349 to 375 (ELDRQKLDEDKRKSDAMNKSLQLASRE) are disordered.

As to quaternary structure, homodimer. Interacts with IDN2 and AGO4. Forms a complex with IDN2 and FMD2/INDL2. In terms of tissue distribution, highly expressed in flowers and at lower levels in roots, leaves and stems.

Forms a complex with IDN2 and FDM2/IDNL2 that is required for RNA-directed DNA methylation (RdDM) and that functions at a downstream step of the RdDM pathway. Required for de novo DNA methylation and 24 nucleotide small interfering RNA (siRNA) accumulation. Binds unmethylated but not methylated DNAs through its coiled-coil domain. May bind double-stranded RNAs (dsRNAs) with 5'-overhangs through its XS domain. However, according to, FMD1 does not bind dsRNAs. This Arabidopsis thaliana (Mouse-ear cress) protein is Factor of DNA methylation 1.